Here is a 304-residue protein sequence, read N- to C-terminus: MEAFSGTPVVVAVAAVAATVLLLLLLRGAGRRPGRPVTLRDPQAKYPLPLVGKEEISHDTKKFRFGLPSPDHVLGLPVGQHVYLSAKINGNLVIRAYTPVSSDETKGYVDLIIKVYYKNVNPKFPEGGKMSQYLDSMKIGDVIDFRGPNGLLVYKGSGTFMIKPDKKSEAQRKFAKHLGVIAGGTGITPMLQLIRHITSDPKDSTKCYLLFANQTEKDILLRAELEDIAKRHPDQVRLWYTLDRPPQDWKYSSGFVTADMIKTHLPPPGGETLILMCGPPPMIQFACQPNLDKLGYPKSSTFSY.

A helical transmembrane segment spans residues 6-26 (GTPVVVAVAAVAATVLLLLLL). The FAD-binding FR-type domain occupies 43–155 (QAKYPLPLVG…RGPNGLLVYK (113 aa)). FAD-binding positions include 135-165 (DSMK…IKPD) and 174-209 (FAKH…KCYL).

The protein belongs to the flavoprotein pyridine nucleotide cytochrome reductase family. The cofactor is FAD.

It is found in the membrane. It catalyses the reaction 2 Fe(III)-[cytochrome b5] + NADH = 2 Fe(II)-[cytochrome b5] + NAD(+) + H(+). In terms of biological role, NADH-cytochrome b5 reductases are involved in desaturation and elongation of fatty acids, cholesterol biosynthesis and drug metabolism. The sequence is that of NADH-cytochrome b5 reductase 2 (CYB5R2) from Gallus gallus (Chicken).